A 273-amino-acid polypeptide reads, in one-letter code: uncharacterized protein (273 aa).

This is an uncharacterized protein from Acheta domesticus (House cricket).